A 251-amino-acid polypeptide reads, in one-letter code: D-aminoacyl-tRNA deacylase (251 aa).

This sequence belongs to the DtdA deacylase family. As to quaternary structure, monomer. Zn(2+) serves as cofactor.

The enzyme catalyses a D-aminoacyl-tRNA + H2O = a tRNA + a D-alpha-amino acid + H(+). The catalysed reaction is glycyl-tRNA(Ala) + H2O = tRNA(Ala) + glycine + H(+). D-aminoacyl-tRNA deacylase with broad substrate specificity. By recycling D-aminoacyl-tRNA to D-amino acids and free tRNA molecules, this enzyme counteracts the toxicity associated with the formation of D-aminoacyl-tRNA entities in vivo. The polypeptide is D-aminoacyl-tRNA deacylase (Pyrobaculum calidifontis (strain DSM 21063 / JCM 11548 / VA1)).